We begin with the raw amino-acid sequence, 444 residues long: MKTVESNFDGLVGPTHNYSGLSVGNIASKSNQSGVSNPKQAVKQGLEKMKALHDMGFVQGVLAPQERPDIHTLRRLGFSGSDSEVLKKSYQYSPQLLAACSSASSMWTANAGTVSPSADTADGKVHFTPANLINKFHRSIEDQVTGNILKATFSDEEHFVHHQALPHSDYFGDEGAANHTRFCREYGEQGVEFFVFGKSAFNESYLAPKKYPARQTLEASEAIARTHGLREQFTVFAQQNPDVIDQGVFHNDVIAVGNKNTLFCHQQAFLNQEKVKSDLSDSYGSGFNVIEVPTDKVSVQDAVETYLFNSQLITKADGTTLIILPEHCRQNSRVWAYLNELVEQKCGIDELHTFDLKQSMQNGGGPACLRLRVVLNEAEQKAVNQHTLMSEELFTTLNLWADKHYRDRIEDKDLADPQLLVESRAALDELTQIMHLGSIYPFQK.

Residues 19–28 (SGLSVGNIAS), asparagine 110, and 137–138 (HR) each bind substrate. Glutamate 174 is a catalytic residue. Arginine 214 provides a ligand contact to substrate. The active site involves histidine 250. Substrate is bound by residues aspartate 252 and asparagine 362. Cysteine 368 serves as the catalytic Nucleophile.

Belongs to the succinylarginine dihydrolase family. In terms of assembly, homodimer.

The enzyme catalyses N(2)-succinyl-L-arginine + 2 H2O + 2 H(+) = N(2)-succinyl-L-ornithine + 2 NH4(+) + CO2. The protein operates within amino-acid degradation; L-arginine degradation via AST pathway; L-glutamate and succinate from L-arginine: step 2/5. Its function is as follows. Catalyzes the hydrolysis of N(2)-succinylarginine into N(2)-succinylornithine, ammonia and CO(2). This is N-succinylarginine dihydrolase from Aliivibrio fischeri (strain ATCC 700601 / ES114) (Vibrio fischeri).